A 394-amino-acid polypeptide reads, in one-letter code: MNSIIELTDYYSSNNYAPLKLVISKGKGVKVWDTDGKQYIDCISGFSVANQGHCHPTIVKAMTEQASKLSIISRVLYSDNLGKWEEKICHLAKKDKVLSLNSGTEAVEAAIKIARKWGSEVKGITDGQVEIIAMNNNFHGRTLGSLSLSNHDAYKAGFHPLLQGTTTVDFGDIEQLTQAISPNTAAIILEPIQGEGGVNIPPKGYIQAVRQLCDKHQILMIADEIQVGLGRTGKWFAMEWEQVVPDIYILGKALGGGLYPVSAVLANNDVMRVLTPGTHGSTFGGNPLAIAISTAALDVLKDEQLVERSERLGSFLLKALLQLKHPSIKEIRGRGLFIGIELNTDAAPFVDQLIQRGILCKDTHRTIIRLSPPLVIDKEEIHQIVAAFQDVFKN.

Residue Lys252 is modified to N6-(pyridoxal phosphate)lysine.

The protein belongs to the class-III pyridoxal-phosphate-dependent aminotransferase family. OAT subfamily. Pyridoxal 5'-phosphate serves as cofactor.

Its subcellular location is the cytoplasm. It carries out the reaction a 2-oxocarboxylate + L-ornithine = L-glutamate 5-semialdehyde + an L-alpha-amino acid. It participates in amino-acid biosynthesis; L-proline biosynthesis; L-glutamate 5-semialdehyde from L-ornithine: step 1/1. Catalyzes the interconversion of ornithine to glutamate semialdehyde. The protein is Ornithine aminotransferase 1 of Staphylococcus aureus (strain Mu50 / ATCC 700699).